The following is a 307-amino-acid chain: Oxygen-dependent coproporphyrinogen-III oxidase (307 aa).

Serine 99 provides a ligand contact to substrate. The a divalent metal cation site is built by histidine 103 and histidine 113. Residue histidine 113 is the Proton donor of the active site. 115-117 is a binding site for substrate; sequence NVR. A divalent metal cation is bound by residues histidine 152 and histidine 182. Positions 247–282 are important for dimerization; it reads YVEFNLVFDRGTLFGLQSGGRTESILLSMPPTAGWR. 265–267 lines the substrate pocket; that stretch reads GGR.

Belongs to the aerobic coproporphyrinogen-III oxidase family. Homodimer. Requires a divalent metal cation as cofactor.

Its subcellular location is the cytoplasm. It carries out the reaction coproporphyrinogen III + O2 + 2 H(+) = protoporphyrinogen IX + 2 CO2 + 2 H2O. Its pathway is porphyrin-containing compound metabolism; protoporphyrin-IX biosynthesis; protoporphyrinogen-IX from coproporphyrinogen-III (O2 route): step 1/1. Its function is as follows. Involved in the heme biosynthesis. Catalyzes the aerobic oxidative decarboxylation of propionate groups of rings A and B of coproporphyrinogen-III to yield the vinyl groups in protoporphyrinogen-IX. This Burkholderia mallei (strain SAVP1) protein is Oxygen-dependent coproporphyrinogen-III oxidase.